Consider the following 130-residue polypeptide: Protein ApaG (130 aa).

The ApaG domain maps to 3-127 (RALTRDIEVT…FSLDSPGLVR (125 aa)).

The protein is Protein ApaG of Sinorhizobium fredii (strain NBRC 101917 / NGR234).